Here is a 219-residue protein sequence, read N- to C-terminus: uncharacterized protein (219 aa).

Positions 30 to 107 (FRLFVGNLGN…RPVKLSRATS (78 aa)) constitute an RRM domain. Basic residues predominate over residues 140–149 (KKIKNKHGKN). Positions 140 to 219 (KKIKNKHGKN…YSRASSFRRV (80 aa)) are disordered. Low complexity predominate over residues 150-169 (SSKSSRAAQSAAAELISSSS). The segment covering 176-186 (ANSTSVPNAVN) has biased composition (polar residues).

This is an uncharacterized protein from Schizosaccharomyces pombe (strain 972 / ATCC 24843) (Fission yeast).